The following is a 101-amino-acid chain: Apolipoprotein C-II (101 aa).

Residues 1-22 form the signal peptide; that stretch reads MGARHLLALLLVLLVLGFEVQG. Positions 66–74 are lipid binding; that stretch reads TMDEKIRDM. The tract at residues 78–101 is lipoprotein lipase cofactor; that stretch reads STAAVSTYVGIFTDQLLSLLKGDE.

The protein belongs to the apolipoprotein C2 family. In terms of processing, proapolipoprotein C-II is synthesized as a sialic acid containing glycoprotein which is subsequently desialylated prior to its proteolytic processing. Post-translationally, proapolipoprotein C-II, the major form found in plasma undergoes proteolytic cleavage of its N-terminal hexapeptide to generate apolipoprotein C-II, which occurs as the minor form in plasma.

Its subcellular location is the secreted. Component of chylomicrons, very low-density lipoproteins (VLDL), low-density lipoproteins (LDL), and high-density lipoproteins (HDL) in plasma. Plays an important role in lipoprotein metabolism as an activator of lipoprotein lipase. Both proapolipoprotein C-II and apolipoprotein C-II can activate lipoprotein lipase. The polypeptide is Apolipoprotein C-II (APOC2) (Tapirus indicus (Asiatic tapir)).